Here is an 87-residue protein sequence, read N- to C-terminus: U3-theraphotoxin-Hhn1n (87 aa).

A signal peptide spans 1–24 (MVNMKASMFLTFAGLVLLFVVCYA). Positions 25–52 (SESEEKEFPKEMLSSIFAVDNDFKQEER) are excised as a propeptide. Intrachain disulfides connect cysteine 54/cysteine 67, cysteine 61/cysteine 72, and cysteine 66/cysteine 79.

Belongs to the neurotoxin 10 (Hwtx-1) family. 51 (Hntx-8) subfamily. Hntx-8 sub-subfamily. In terms of tissue distribution, expressed by the venom gland.

It localises to the secreted. Weakly inhibits Kv11.1/KCNH2/ERG1, Kv1.2/KCNA2, Kv1.3/KCNA3, and Kv2.1/KCNB1. The sequence is that of U3-theraphotoxin-Hhn1n from Cyriopagopus hainanus (Chinese bird spider).